A 292-amino-acid polypeptide reads, in one-letter code: Putative rRNA 2'-O-methyltransferase fibrillarin 3 (292 aa).

A disordered region spans residues 1 to 58 (MKPPQRGRGGGVRGGRGLARGGEGSAVRGSGRGGESGRGRGPGRVKSESDGGIKGGSK). The span at 7–42 (GRGGGVRGGRGLARGGEGSAVRGSGRGGESGRGRGP) shows a compositional bias: gly residues. S-adenosyl-L-methionine contacts are provided by residues 146–147 (YT), 165–166 (EH), 190–191 (DA), and 210–213 (DVNH).

Belongs to the methyltransferase superfamily. Fibrillarin family. As to quaternary structure, component of box C/D small nucleolar ribonucleoprotein (snoRNP) particles. In terms of tissue distribution, not detectable by RT-PCR.

Its subcellular location is the nucleus. The protein resides in the nucleolus. It catalyses the reaction L-glutaminyl-[histone H2A] + S-adenosyl-L-methionine = N(5)-methyl-L-glutaminyl-[histone H2A] + S-adenosyl-L-homocysteine + H(+). Its function is as follows. S-adenosyl-L-methionine-dependent methyltransferase that has the ability to methylate both RNAs and proteins. Involved in pre-rRNA processing. Utilizes the methyl donor S-adenosyl-L-methionine to catalyze the site-specific 2'-hydroxyl methylation of ribose moieties in pre-ribosomal RNA. Site specificity is provided by a guide RNA that base pairs with the substrate. Methylation occurs at a characteristic distance from the sequence involved in base pairing with the guide RNA. Also acts as a protein methyltransferase by mediating methylation of 'Gln-105' of histone H2A (H2AQ105me), a modification that impairs binding of the FACT complex and is specifically present at 35S ribosomal DNA locus. The sequence is that of Putative rRNA 2'-O-methyltransferase fibrillarin 3 (FIB3) from Arabidopsis thaliana (Mouse-ear cress).